Reading from the N-terminus, the 542-residue chain is Putative cysteine ligase BshC (542 aa).

A coiled-coil region spans residues 458–479 (LTKNATLLQAQIDFLHQTLQRA).

Belongs to the BshC family.

Functionally, involved in bacillithiol (BSH) biosynthesis. May catalyze the last step of the pathway, the addition of cysteine to glucosamine malate (GlcN-Mal) to generate BSH. This is Putative cysteine ligase BshC from Geobacillus sp. (strain WCH70).